The sequence spans 584 residues: Arginine--tRNA ligase (584 aa).

The short motif at 127 to 137 is the 'HIGH' region element; it reads PNTNKPLHIGH.

Belongs to the class-I aminoacyl-tRNA synthetase family. As to quaternary structure, monomer.

Its subcellular location is the cytoplasm. The catalysed reaction is tRNA(Arg) + L-arginine + ATP = L-arginyl-tRNA(Arg) + AMP + diphosphate. This chain is Arginine--tRNA ligase, found in Borrelia hermsii (strain HS1 / DAH).